Here is a 449-residue protein sequence, read N- to C-terminus: Trigger factor (449 aa).

Residues 173–258 enclose the PPIase FKBP-type domain; the sequence is GDRVTVDFVG…MKKVEWPHLP (86 aa).

Belongs to the FKBP-type PPIase family. Tig subfamily.

It is found in the cytoplasm. It carries out the reaction [protein]-peptidylproline (omega=180) = [protein]-peptidylproline (omega=0). In terms of biological role, involved in protein export. Acts as a chaperone by maintaining the newly synthesized protein in an open conformation. Functions as a peptidyl-prolyl cis-trans isomerase. The chain is Trigger factor from Burkholderia thailandensis (strain ATCC 700388 / DSM 13276 / CCUG 48851 / CIP 106301 / E264).